The chain runs to 261 residues: Indole-3-glycerol phosphate synthase (261 aa).

Belongs to the TrpC family.

It carries out the reaction 1-(2-carboxyphenylamino)-1-deoxy-D-ribulose 5-phosphate + H(+) = (1S,2R)-1-C-(indol-3-yl)glycerol 3-phosphate + CO2 + H2O. Its pathway is amino-acid biosynthesis; L-tryptophan biosynthesis; L-tryptophan from chorismate: step 4/5. This Burkholderia ambifaria (strain ATCC BAA-244 / DSM 16087 / CCUG 44356 / LMG 19182 / AMMD) (Burkholderia cepacia (strain AMMD)) protein is Indole-3-glycerol phosphate synthase.